The chain runs to 98 residues: Large ribosomal subunit protein uL23 (98 aa).

It belongs to the universal ribosomal protein uL23 family. In terms of assembly, part of the 50S ribosomal subunit. Contacts protein L29, and trigger factor when it is bound to the ribosome.

Functionally, one of the early assembly proteins it binds 23S rRNA. One of the proteins that surrounds the polypeptide exit tunnel on the outside of the ribosome. Forms the main docking site for trigger factor binding to the ribosome. The chain is Large ribosomal subunit protein uL23 from Maricaulis maris (strain MCS10) (Caulobacter maris).